Consider the following 357-residue polypeptide: Nitronate monooxygenase npaC (357 aa).

Residues Q167, G172, and G206 each contribute to the FMN site.

It belongs to the nitronate monooxygenase family. NMO class I subfamily. The cofactor is FMN.

Functionally, nitronate monooxygenase; part of the gene cluster that mediates the biosynthesis of the deadly neurotoxic nitroalkane 3-nitropropanoic acid (3-NPA) that acts as an antimetabolite of succinate and irreversibly inhibits succinate dehydrogenase and disrupts mitochondrial oxidative phosphorylation. Catalyzes the oxidation of 3-NPA to nitrite and malonic semialdehyde. NpaC is not conserved in all fungal npa clusters and, while it is possible that it serves as a self-protection mechanism against accumulation of 3-NPA (by npaA and npaB) in the producing host, the more likely scenario may be the three enzymes representing an alternative catabolic pathway of aspartate to generate readily metabolizable nitrogen and carbon sources. This Metarhizium robertsii (strain ARSEF 23 / ATCC MYA-3075) (Metarhizium anisopliae (strain ARSEF 23)) protein is Nitronate monooxygenase npaC.